The sequence spans 184 residues: Protein GrpE (184 aa).

The interval 1–24 (MADEQLDEKNLNSEEAGAVNGDAR) is disordered.

It belongs to the GrpE family. As to quaternary structure, homodimer.

The protein localises to the cytoplasm. In terms of biological role, participates actively in the response to hyperosmotic and heat shock by preventing the aggregation of stress-denatured proteins, in association with DnaK and GrpE. It is the nucleotide exchange factor for DnaK and may function as a thermosensor. Unfolded proteins bind initially to DnaJ; upon interaction with the DnaJ-bound protein, DnaK hydrolyzes its bound ATP, resulting in the formation of a stable complex. GrpE releases ADP from DnaK; ATP binding to DnaK triggers the release of the substrate protein, thus completing the reaction cycle. Several rounds of ATP-dependent interactions between DnaJ, DnaK and GrpE are required for fully efficient folding. The chain is Protein GrpE from Pseudomonas entomophila (strain L48).